Here is a 1843-residue protein sequence, read N- to C-terminus: GTPase-activating protein CdGAPr (1843 aa).

Positions 94–117 (ASTESSCSPPIQGAVPPPKPSRHM) are disordered. Residues Ser166, Ser168, and Ser180 each carry the phosphoserine modification. The SH3 domain maps to 295–363 (PAVGAAYGVR…PQSCVATIGD (69 aa)). A Rho-GAP domain is found at 424 to 618 (CDLSEHLLNS…YLIRNCHNIF (195 aa)). A disordered region spans residues 746–780 (PRSWQKRKPDKTPSWKSIFSRSQRQGNPDPGQKIT). Residues 759–771 (SWKSIFSRSQRQG) show a composition bias toward polar residues. Phosphoserine occurs at positions 837 and 840. At Thr843 the chain carries Phosphothreonine. Phosphoserine is present on residues Ser851, Ser861, Ser872, and Ser876. 2 disordered regions span residues 894-975 (ESES…GHES) and 1013-1106 (ASVE…RVEP). The segment covering 928-939 (FSSQTNSVNPSP) has biased composition (polar residues). Ser1029 bears the Phosphoserine mark. Residues 1029 to 1053 (SPISSSNGASVGSSSSSTRYSYPSV) are compositionally biased toward low complexity. Residues 1058-1069 (KRKEQQDAKERF) are compositionally biased toward basic and acidic residues. The segment covering 1071–1097 (YQGTFTQPGQKQESSAPRPVHSTNNGA) has biased composition (polar residues). Residues Thr1118 and Thr1121 each carry the phosphothreonine modification. 4 positions are modified to phosphoserine: Ser1125, Ser1216, Ser1281, and Ser1284. The stretch at 1378–1404 (YKAAEMTQQLLQLEQEHHDHEEQQEKE) forms a coiled coil. Phosphoserine occurs at positions 1453 and 1456. Phosphothreonine is present on Thr1679. 2 disordered regions span residues 1721 to 1745 (TGGG…LGQQ) and 1779 to 1829 (TAQK…QFSI). The span at 1779-1790 (TAQKYGSTSKTP) shows a compositional bias: polar residues. Residues 1793 to 1806 (KFERSQPMPRDRLQ) are compositionally biased toward basic and acidic residues. Residues 1807 to 1818 (RNSLAESNAGTN) are compositionally biased toward polar residues.

In terms of tissue distribution, ubiquitously expressed.

In terms of biological role, probably functions as a GTPase-activating protein (GAP) for RAC1 and/or CDC42. Required for optic stalk formation. The protein is GTPase-activating protein CdGAPr (CdGAPr) of Drosophila melanogaster (Fruit fly).